The chain runs to 316 residues: Pantothenate kinase (316 aa).

95 to 102 (GSVAVGKS) is a binding site for ATP.

It belongs to the prokaryotic pantothenate kinase family.

The protein resides in the cytoplasm. The enzyme catalyses (R)-pantothenate + ATP = (R)-4'-phosphopantothenate + ADP + H(+). It functions in the pathway cofactor biosynthesis; coenzyme A biosynthesis; CoA from (R)-pantothenate: step 1/5. This chain is Pantothenate kinase, found in Shewanella sp. (strain MR-4).